A 688-amino-acid polypeptide reads, in one-letter code: Transcription factor GTE9 (688 aa).

A disordered region spans residues 1–36; it reads MTERNGGFPGDYCFEAPGGDYDEGSDSPRVSEGSNC. The Bromo domain maps to 132–238; that stretch reads TAVMLLMKQC…KFFEVRWKTL (107 aa). Residues 280–361 form the NET domain; that stretch reads ENVVDPAKRV…EHLREIQNKK (82 aa). Positions 423–505 are disordered; sequence GNSLGSVSGD…AQNEKQLPPE (83 aa). Position 478 is a phosphoserine (Ser478). The segment covering 491 to 500 has biased composition (polar residues); sequence QDGNSAQNEK. Residues 505–688 are transcription activation domain; sequence EKSYRAAILK…EIDIEEGEID (184 aa). The stretch at 534–613 forms a coiled coil; sequence TRDPEKLQRE…QSVELNENAK (80 aa). Positions 660 to 688 are disordered; the sequence is FMKQDEDEEEADPLTSPAPEIDIEEGEID.

In terms of assembly, interacts with BT1.

The protein resides in the nucleus. The polypeptide is Transcription factor GTE9 (GTE9) (Arabidopsis thaliana (Mouse-ear cress)).